The sequence spans 314 residues: Ribosomal RNA small subunit methyltransferase H (314 aa).

Residues 36–38 (GGH), aspartate 56, phenylalanine 82, aspartate 104, and glutamine 111 contribute to the S-adenosyl-L-methionine site.

Belongs to the methyltransferase superfamily. RsmH family.

It is found in the cytoplasm. It catalyses the reaction cytidine(1402) in 16S rRNA + S-adenosyl-L-methionine = N(4)-methylcytidine(1402) in 16S rRNA + S-adenosyl-L-homocysteine + H(+). Its function is as follows. Specifically methylates the N4 position of cytidine in position 1402 (C1402) of 16S rRNA. In Ectopseudomonas mendocina (strain ymp) (Pseudomonas mendocina), this protein is Ribosomal RNA small subunit methyltransferase H.